The primary structure comprises 407 residues: Putative polysaccharide ligase RF_0568 (407 aa).

10 helical membrane passes run 15–35 (LGMV…LMLF), 71–91 (MTIK…LFAI), 100–120 (FIQV…VPFG), 129–149 (LILG…SHGF), 166–186 (GCAL…SSGK), 203–223 (ISDS…FILA), 229–249 (IFFK…PVIA), 272–292 (LFIW…GYGF), 324–344 (ILQI…CLVY), and 379–399 (IWQI…KLLV).

Belongs to the O-antigen ligase family.

It localises to the membrane. This chain is Putative polysaccharide ligase RF_0568, found in Rickettsia felis (strain ATCC VR-1525 / URRWXCal2) (Rickettsia azadi).